A 61-amino-acid chain; its full sequence is Large ribosomal subunit protein uL30 (61 aa).

The protein belongs to the universal ribosomal protein uL30 family. As to quaternary structure, part of the 50S ribosomal subunit.

This Laribacter hongkongensis (strain HLHK9) protein is Large ribosomal subunit protein uL30.